A 111-amino-acid chain; its full sequence is Translation initiation factor 1A (111 aa).

Positions 12-86 (GEMPLPSEDE…KKGEVVYRYL (75 aa)) constitute an S1-like domain.

The protein belongs to the eIF-1A family.

In terms of biological role, seems to be required for maximal rate of protein biosynthesis. Enhances ribosome dissociation into subunits and stabilizes the binding of the initiator Met-tRNA(I) to 40 S ribosomal subunits. The chain is Translation initiation factor 1A (eIF1A) from Aeropyrum pernix (strain ATCC 700893 / DSM 11879 / JCM 9820 / NBRC 100138 / K1).